The following is a 211-amino-acid chain: Large ribosomal subunit protein bL25 (211 aa).

Belongs to the bacterial ribosomal protein bL25 family. CTC subfamily. In terms of assembly, part of the 50S ribosomal subunit; part of the 5S rRNA/L5/L18/L25 subcomplex. Contacts the 5S rRNA. Binds to the 5S rRNA independently of L5 and L18.

In terms of biological role, this is one of the proteins that binds to the 5S RNA in the ribosome where it forms part of the central protuberance. In Methylobacterium nodulans (strain LMG 21967 / CNCM I-2342 / ORS 2060), this protein is Large ribosomal subunit protein bL25.